The sequence spans 364 residues: MAWRTNLACLIKAGGRRWFPVPEYSSLPPVLNNTCSVRKSTAPEKRVASVAACDTDGKEPGNPLDRLFSLEQQASILQVLNTASDKELEAFRLLRGRKSVNIVEHRKKFGPFQRLENLIDVPLIQYKTAVEVCNSILCPENRRRKKSQEKWLLRKFIKPGVEQERLKAVKSIVSIVFGTRRIAWAHLDRRPTVLDWQQTECWKLTNKTYPTSFYLEEISSVISKIPKADLYILEKSGLSIQNTSLLPILLHFLITEAMLYALLNKTFAEDGQHRVLSINRNAVGKHFDLMIGDTRTSGRELVKQFLSESVLKERPRVFFPQDLLVQYRQKVVKSSYRIEELYDSLLQAVAFYELVFGKDSELKC.

A mitochondrion-targeting transit peptide spans 1-39 (MAWRTNLACLIKAGGRRWFPVPEYSSLPPVLNNTCSVRK).

The protein belongs to the TEFM family. Interacts with POLRMT.

It localises to the mitochondrion matrix. The protein localises to the mitochondrion nucleoid. In terms of biological role, transcription elongation factor which increases mitochondrial RNA polymerase processivity. Regulates transcription of the mitochondrial genome, including genes important for the oxidative phosphorylation machinery. This chain is Transcription elongation factor, mitochondrial (Tefm), found in Mus musculus (Mouse).